The sequence spans 73 residues: Bacterioferritin-associated ferredoxin (73 aa).

[2Fe-2S] cluster is bound by residues Cys4 and Cys6. Phosphate contacts are provided by Arg26 and Arg29. Positions 38 and 41 each coordinate [2Fe-2S] cluster. Lys46 is a phosphate binding site.

The protein belongs to the Bfd family. As to quaternary structure, monomer. Interacts with BfrB; up to 12 Bfd proteins can bind to the BfrB bacterioferritin complex (BFR). One Bfd protein binds to a BfrB dimer in the BFR, with the [2Fe-2S] cluster positioned about 22 Angstroms above the heme of BfrB. Does not interact with FtnA. The cofactor is [2Fe-2S] cluster. Phosphate is required as a cofactor.

Required for mobilization of iron from the bacterioferritin (BFR) complex, composed of BfrB and FtnA in varying proportions; mobilization requires the [2Fe-2S] cluster of this protein. Reduction of the BfrB heme group occurs in the presence of Bfd, strongly suggesting that the BfrB-Bfd complex allows heme to mediate electron transfer from FPR to the Fe(3+) iron core in the BFR prior to its release as Fe(2+). The polypeptide is Bacterioferritin-associated ferredoxin (Pseudomonas aeruginosa (strain ATCC 15692 / DSM 22644 / CIP 104116 / JCM 14847 / LMG 12228 / 1C / PRS 101 / PAO1)).